A 98-amino-acid polypeptide reads, in one-letter code: Large ribosomal subunit protein uL23 (98 aa).

This sequence belongs to the universal ribosomal protein uL23 family. Part of the 50S ribosomal subunit. Contacts protein L29, and trigger factor when it is bound to the ribosome.

In terms of biological role, one of the early assembly proteins it binds 23S rRNA. One of the proteins that surrounds the polypeptide exit tunnel on the outside of the ribosome. Forms the main docking site for trigger factor binding to the ribosome. This Legionella pneumophila (strain Paris) protein is Large ribosomal subunit protein uL23.